The primary structure comprises 165 residues: Neurotrophin-3 (165 aa).

An N-terminal signal peptide occupies residues 1 to 3 (IQS). Residues 4 to 119 (TSMDQGSLSE…VLNRTSRRKR (116 aa)) constitute a propeptide that is removed on maturation. The tract at residues 32 to 61 (KVPKQAARTKDGTQTTAKKTEAEPEATANK) is disordered. An N-linked (GlcNAc...) asparagine glycan is attached at asparagine 112.

It belongs to the NGF-beta family.

Its subcellular location is the secreted. Its function is as follows. Seems to promote the survival of visceral and proprioceptive sensory neurons. The sequence is that of Neurotrophin-3 (NTF3) from Xenopeltis unicolor (Sunbeam snake).